A 330-amino-acid polypeptide reads, in one-letter code: 3',5'-cyclic-nucleotide phosphodiesterase (330 aa).

Positions 1-22 (MFKNKLAVLFTCLSVFSFSAQS) are cleaved as a signal peptide.

This sequence belongs to the cyclic nucleotide phosphodiesterase class-II family.

The protein localises to the periplasm. The enzyme catalyses a nucleoside 3',5'-cyclic phosphate + H2O = a nucleoside 5'-phosphate + H(+). Its function is as follows. Seems to allow the organism to grow on cAMP. The sequence is that of 3',5'-cyclic-nucleotide phosphodiesterase (cpdP) from Aliivibrio fischeri (Vibrio fischeri).